A 250-amino-acid chain; its full sequence is Low affinity immunoglobulin gamma Fc region receptor III-A (250 aa).

Positions 1–20 (MWRLLSPTALLLLVSAGTRA) are cleaved as a signal peptide. Residues 21–207 (ADLSKAMVVL…TSTFLPHWYQ (187 aa)) lie on the Extracellular side of the membrane. Ig-like C2-type domains lie at 32 to 105 (PEWN…LEVH) and 120 to 189 (EGDT…VNIT). 2 cysteine pairs are disulfide-bonded: cysteine 47-cysteine 89 and cysteine 128-cysteine 172. N-linked (GlcNAc...) asparagine glycans are attached at residues asparagine 63, asparagine 133, asparagine 180, and asparagine 187. Residues 208–228 (IAFFLVTALLFVVDTGLHVAV) form a helical membrane-spanning segment. The Cytoplasmic portion of the chain corresponds to 229–250 (QRDLQSSVKEWKDGKVTWSHGP).

As to quaternary structure, forms a heterooligomeric complex with ITAM-containing signaling subunits FCER1G. Interacts (via transmembrane domain) with signaling subunits; this interaction is a prerequisite for receptor complex expression on the cell surface and intracellular signal transduction. Binds the Fc region of antigen-complexed IgG.

It is found in the cell membrane. In terms of biological role, receptor for the invariable Fc fragment of immunoglobulin gamma (IgG). Optimally activated upon binding of clustered antigen-IgG complexes displayed on cell surfaces, triggers lysis of antibody-coated cells, a process known as antibody-dependent cellular cytotoxicity (ADCC). Does not bind free monomeric IgG, thus avoiding inappropriate effector cell activation in the absence of antigenic trigger. Mediates IgG effector functions on natural killer (NK) cells. Binds antigen-IgG complexes generated upon infection and triggers NK cell-dependent cytokine production and degranulation to limit viral load and propagation. Fc-binding subunit that associates with FCER1G adapter to form functional signaling complexes. Following the engagement of antigen-IgG complexes, triggers phosphorylation of immunoreceptor tyrosine-based activation motif (ITAM)-containing adapter with subsequent activation of phosphatidylinositol 3-kinase signaling and sustained elevation of intracellular calcium that ultimately drive NK cell activation. Mediates enhanced ADCC in response to afucosylated IgGs. The sequence is that of Low affinity immunoglobulin gamma Fc region receptor III-A from Felis catus (Cat).